Here is a 400-residue protein sequence, read N- to C-terminus: Methylthioribose kinase (400 aa).

Residues asparagine 40, lysine 57, and 111-113 (EDL) contribute to the ATP site. Aspartate 229 is a binding site for substrate. 246 to 248 (DAE) provides a ligand contact to ATP. Position 344 (arginine 344) interacts with substrate.

The protein belongs to the methylthioribose kinase family. As to quaternary structure, homodimer.

The catalysed reaction is 5-(methylsulfanyl)-D-ribose + ATP = 5-(methylsulfanyl)-alpha-D-ribose 1-phosphate + ADP + H(+). It functions in the pathway amino-acid biosynthesis; L-methionine biosynthesis via salvage pathway; S-methyl-5-thio-alpha-D-ribose 1-phosphate from S-methyl-5'-thioadenosine (hydrolase route): step 2/2. In terms of biological role, catalyzes the phosphorylation of methylthioribose into methylthioribose-1-phosphate. The protein is Methylthioribose kinase of Pectobacterium carotovorum subsp. carotovorum (strain PC1).